We begin with the raw amino-acid sequence, 205 residues long: CASP-like protein 2A1 (205 aa).

The segment at 1–25 (MDKSKVSTAVGGETPVGLITGSRDD) is disordered. Residues 1-34 (MDKSKVSTAVGGETPVGLITGSRDDELESGSMRT) are Cytoplasmic-facing. A helical transmembrane segment spans residues 35 to 55 (AETVLRLVPMAFCISALVLML). Over 56–76 (KNSQTNDFGTLSYSDLGAFRY) the chain is Extracellular. The helical transmembrane segment at 77-97 (LVHANGICAGYSLLSAIIVAM) threads the bilayer. Residues 98–105 (PRPSTMSR) lie on the Cytoplasmic side of the membrane. Residues 106 to 126 (AWTFFFLDQVLTYVILAAAAV) traverse the membrane as a helical segment. Residues 127-156 (SVEALYLARKGDIAITWSAACVSFGGFCHK) lie on the Extracellular side of the membrane. A helical transmembrane segment spans residues 157 to 177 (AITSAVITFIVVVCYALLSLV). The Cytoplasmic segment spans residues 178-205 (SSYKLFSRYGAPDVSYPGKGIEVAAFHS).

The protein belongs to the Casparian strip membrane proteins (CASP) family. Homodimer and heterodimers.

The protein resides in the cell membrane. The protein is CASP-like protein 2A1 of Ricinus communis (Castor bean).